The following is a 197-amino-acid chain: Ras-related protein RabG2 (197 aa).

GTP-binding positions include 13 to 20, 61 to 65, and 119 to 122; these read GDSAVGKT, DTAGQ, and NKCD. The tract at residues 175-197 is disordered; it reads SKPSVVNPGSGGTSNTGGKKKFC. The S-geranylgeranyl cysteine moiety is linked to residue Cys-197.

Belongs to the small GTPase superfamily. Rab family.

Its subcellular location is the cell membrane. This chain is Ras-related protein RabG2 (rabG2), found in Dictyostelium discoideum (Social amoeba).